Here is a 408-residue protein sequence, read N- to C-terminus: LL-diaminopimelate aminotransferase (408 aa).

The substrate site is built by tyrosine 15 and glycine 42. Residues tyrosine 72, 108 to 109 (SK), tyrosine 132, asparagine 187, tyrosine 218, and 246 to 248 (SFS) each bind pyridoxal 5'-phosphate. Substrate is bound by residues lysine 109, tyrosine 132, and asparagine 187. An N6-(pyridoxal phosphate)lysine modification is found at lysine 249. Pyridoxal 5'-phosphate is bound by residues arginine 257 and asparagine 292. Asparagine 292 and arginine 388 together coordinate substrate.

It belongs to the class-I pyridoxal-phosphate-dependent aminotransferase family. LL-diaminopimelate aminotransferase subfamily. As to quaternary structure, homodimer. Requires pyridoxal 5'-phosphate as cofactor.

It carries out the reaction (2S,6S)-2,6-diaminopimelate + 2-oxoglutarate = (S)-2,3,4,5-tetrahydrodipicolinate + L-glutamate + H2O + H(+). It participates in amino-acid biosynthesis; L-lysine biosynthesis via DAP pathway; LL-2,6-diaminopimelate from (S)-tetrahydrodipicolinate (aminotransferase route): step 1/1. Involved in the synthesis of meso-diaminopimelate (m-DAP or DL-DAP), required for both lysine and peptidoglycan biosynthesis. Catalyzes the direct conversion of tetrahydrodipicolinate to LL-diaminopimelate. This chain is LL-diaminopimelate aminotransferase, found in Leptospira borgpetersenii serovar Hardjo-bovis (strain L550).